A 788-amino-acid polypeptide reads, in one-letter code: Bifunctional purine biosynthetic protein ADE1 (788 aa).

The tract at residues Met-1 to Phe-429 is GARS. The 210-residue stretch at Lys-114–Glu-323 folds into the ATP-grasp domain. Val-140 to Ser-201 is an ATP binding site. The Mg(2+) site is built by Glu-291 and Asn-293. The segment at Ile-439 to Val-752 is AIRS.

In the N-terminal section; belongs to the GARS family. It in the C-terminal section; belongs to the AIR synthase family. Mg(2+) serves as cofactor. The cofactor is Mn(2+).

The protein resides in the cytoplasm. Its subcellular location is the cytosol. It carries out the reaction 5-phospho-beta-D-ribosylamine + glycine + ATP = N(1)-(5-phospho-beta-D-ribosyl)glycinamide + ADP + phosphate + H(+). The enzyme catalyses 2-formamido-N(1)-(5-O-phospho-beta-D-ribosyl)acetamidine + ATP = 5-amino-1-(5-phospho-beta-D-ribosyl)imidazole + ADP + phosphate + H(+). Its pathway is purine metabolism; IMP biosynthesis via de novo pathway; 5-amino-1-(5-phospho-D-ribosyl)imidazole from N(2)-formyl-N(1)-(5-phospho-D-ribosyl)glycinamide: step 2/2. It functions in the pathway purine metabolism; IMP biosynthesis via de novo pathway; N(1)-(5-phospho-D-ribosyl)glycinamide from 5-phospho-alpha-D-ribose 1-diphosphate: step 2/2. In terms of biological role, catalyzes the second and fifth step in the 'de novo' purine biosynthesis pathway; contains phosphoribosylamine--glycine ligase (GARS) and phosphoribosylformylglycinamidine cyclo-ligase (AIRS) activities. The sequence is that of Bifunctional purine biosynthetic protein ADE1 from Yarrowia lipolytica (strain CLIB 122 / E 150) (Yeast).